The following is a 71-amino-acid chain: MEAGAYLNAIIFVLVATIIAVISVGLTQTEPCTIRITGESITVHACHLDSETIKALATLKPLSLERLSFHQ.

At 1 to 3 (MEA) the chain is on the lumenal side. The chain crosses the membrane as a helical span at residues 4–26 (GAYLNAIIFVLVATIIAVISVGL). Topologically, residues 27–71 (TQTEPCTIRITGESITVHACHLDSETIKALATLKPLSLERLSFHQ) are cytoplasmic.

It belongs to the Tymovirales TGBp3 protein family.

It is found in the host endoplasmic reticulum membrane. In terms of biological role, plays a role in viral cell-to-cell propagation, by facilitating genome transport to neighboring plant cells through plasmosdesmata. May induce the formation of granular vesicles derived from the Endoplasmic reticulum, which align on actin filaments. In Brassica campestris (Field mustard), this protein is Movement protein TGBp3.